Reading from the N-terminus, the 396-residue chain is Tryptophan synthase beta chain (396 aa).

Lys-86 carries the post-translational modification N6-(pyridoxal phosphate)lysine.

The protein belongs to the TrpB family. Tetramer of two alpha and two beta chains. It depends on pyridoxal 5'-phosphate as a cofactor.

The catalysed reaction is (1S,2R)-1-C-(indol-3-yl)glycerol 3-phosphate + L-serine = D-glyceraldehyde 3-phosphate + L-tryptophan + H2O. It participates in amino-acid biosynthesis; L-tryptophan biosynthesis; L-tryptophan from chorismate: step 5/5. The beta subunit is responsible for the synthesis of L-tryptophan from indole and L-serine. This Vibrio atlanticus (strain LGP32) (Vibrio splendidus (strain Mel32)) protein is Tryptophan synthase beta chain.